We begin with the raw amino-acid sequence, 428 residues long: Putative gustatory receptor 2a (428 aa).

Residues 1–40 lie on the Cytoplasmic side of the membrane; the sequence is MDTLRALEPLHRACQVCNLWPWRLAPPPDSEGILLRRSRW. The chain crosses the membrane as a helical span at residues 41 to 61; it reads LELYGWTVLIAATSFTVYGLF. The Extracellular segment spans residues 62–145; that stretch reads QESSVEEKQD…INMRRQTSRR (84 aa). A helical transmembrane segment spans residues 146–166; it reads AVWILWGYAVSQLLILGAKLL. At 167–173 the chain is on the cytoplasmic side; the sequence is SRGDRFP. The chain crosses the membrane as a helical span at residues 174–194; that stretch reads IYWISYLLPLLVCGLRYFQIF. Asn195 is a glycosylation site (N-linked (GlcNAc...) asparagine). The Extracellular portion of the chain corresponds to 195-250; sequence NATQLVRQRLDVLLVALQQLQLHQKGPAVDTVLEEQEDLEEAAMDRLIAVRLVYQR. A helical membrane pass occupies residues 251–271; the sequence is VWALVALLNRCYGLSMLMQVG. Residues 272 to 300 lie on the Cytoplasmic side of the membrane; that stretch reads NDFLAITSNCYWMFLNFRQSAASPFDILQ. The helical transmembrane segment at 301–321 threads the bilayer; that stretch reads IVASGVWSAPHLGNVLVLSLL. The Extracellular segment spans residues 322–349; it reads CDRTAQCASRLALCLHQVSVDLRNESHN. The N-linked (GlcNAc...) asparagine glycan is linked to Asn345. A helical transmembrane segment spans residues 350–370; the sequence is ALVGTLVRYCAPLIILVPLQI. Over 371-395 the chain is Cytoplasmic; that stretch reads TQFSLQLLHQRLHFSAAGFFNVDCT. Residues 396–416 form a helical membrane-spanning segment; that stretch reads LLYTIVGATTTYLIILIQFHM. The Extracellular segment spans residues 417–428; the sequence is SESTIGSDSNGQ.

It belongs to the insect chemoreceptor superfamily. Gustatory receptor (GR) family. Gr2a subfamily. Expressed in neurons of the terminal external chemosensory organ, the dorsal external chemosensory organ, as well as in the dorsal pharyngeal sense organ of larvae.

The protein resides in the cell membrane. Functionally, probable gustatory receptor which mediates acceptance or avoidance behavior, depending on its not yet determined substrates. This Drosophila melanogaster (Fruit fly) protein is Putative gustatory receptor 2a (Gr2a).